The following is a 233-amino-acid chain: Ciliary microtubule inner protein 6 (233 aa).

2 stretches are compositionally biased toward basic and acidic residues: residues 1 to 14 and 21 to 33; these read MEGE…KTED and AERK…EKSP. The interval 1–45 is disordered; it reads MEGEEKQQQHKTEDDGIACVAERKVEIKNEKSPGKSTQHPKPCVD. Positions 127–159 are mn; sequence GIVPLTSLDVSGEHENNFVEYISFIHQYDARRT. A disordered region spans residues 192–233; that stretch reads LLNTLESGSSEQPQKTDKGNSSGDKVTSPGLCQQNSQELLET. Polar residues predominate over residues 195–233; sequence TLESGSSEQPQKTDKGNSSGDKVTSPGLCQQNSQELLET.

The protein localises to the cell projection. The protein resides in the cilium. This Mus musculus (Mouse) protein is Ciliary microtubule inner protein 6 (Cimip6).